Consider the following 135-residue polypeptide: Large ribosomal subunit protein uL16c (135 aa).

Belongs to the universal ribosomal protein uL16 family. Part of the 50S ribosomal subunit.

The protein localises to the plastid. The polypeptide is Large ribosomal subunit protein uL16c (Epifagus virginiana (Beechdrops)).